Here is a 255-residue protein sequence, read N- to C-terminus: Acetylglutamate kinase (255 aa).

Substrate-binding positions include 40-41 (GG), Arg62, and Asn153.

This sequence belongs to the acetylglutamate kinase family. ArgB subfamily.

The protein localises to the cytoplasm. It catalyses the reaction N-acetyl-L-glutamate + ATP = N-acetyl-L-glutamyl 5-phosphate + ADP. It participates in amino-acid biosynthesis; L-arginine biosynthesis; N(2)-acetyl-L-ornithine from L-glutamate: step 2/4. In terms of biological role, catalyzes the ATP-dependent phosphorylation of N-acetyl-L-glutamate. The polypeptide is Acetylglutamate kinase (Bacillus cereus (strain ATCC 10987 / NRS 248)).